Consider the following 132-residue polypeptide: uncharacterized protein (132 aa).

An N-terminal signal peptide occupies residues 1–35; it reads MSFEYRHYKREAKICTCRGGWAHVLLCIGVSQGAC. The interval 91–132 is disordered; it reads AHPGSHSDQPPGVPSRRKSRLERWSPSVSRSTSPPTEAPFCL. Residues 115-125 are compositionally biased toward low complexity; the sequence is SPSVSRSTSPP.

The protein resides in the secreted. This is an uncharacterized protein from Homo sapiens (Human).